A 538-amino-acid chain; its full sequence is Syncytin-1 (538 aa).

Residues 1 to 20 form the signal peptide; it reads MALPYHIFLFTVLLPSFTLT. Over 21–443 the chain is Extracellular; it reads APPPCRCMTS…NTGPWGLLSQ (423 aa). Asn169 carries an N-linked (GlcNAc...) asparagine glycan. The CXXC signature appears at 186–189; that stretch reads CWIC. 3 cysteine pairs are disulfide-bonded: Cys186-Cys189, Cys186-Cys405, and Cys397-Cys404. Residues Asn208, Asn214, Asn234, Asn242, and Asn281 are each glycosylated (N-linked (GlcNAc...) asparagine). The interval 320-340 is fusion peptide; the sequence is ILPFVIGAGVLGALGTGIGGI. Residues 380-396 form an immunosuppression region; sequence LQNRRALDLLTAERGGT. The CX6CC motif lies at 397-406; the sequence is CLFLGEECCY. Asn409 carries N-linked (GlcNAc...) asparagine glycosylation. The chain crosses the membrane as a helical span at residues 444 to 464; sequence WMPWILPFLGPLAAIILLLLF. The essential for the fusiogenic function stretch occupies residues 465-484; that stretch reads GPCIFNLLVNFVSSRIEAVK. At 465–538 the chain is on the cytoplasmic side; sequence GPCIFNLLVN…LLRPNSAGSS (74 aa). A disordered region spans residues 496–538; that stretch reads KIYRRPLDRPASPRSDVNDIKGTPPEEISAAQPLLRPNSAGSS.

Belongs to the gamma type-C retroviral envelope protein family. HERV class-I W env subfamily. The mature envelope protein (Env) consists of a trimer of SU-TM heterodimers attached probably by a labile interchain disulfide bond. Interacts with the C-type lectin CD209/DC-SIGN. Post-translationally, specific enzymatic cleavages in vivo yield mature proteins. Envelope glycoproteins are synthesized as an inactive precursor that is heavily N-glycosylated and processed likely by furin in the Golgi to yield the mature SU and TM proteins. The cleavage site between SU and TM requires the minimal sequence [KR]-X-[KR]-R. The intracytoplasmic tail cleavage by the viral protease that is required for the fusiogenic activity of some retroviruses envelope proteins seems to have been lost during evolution. In terms of processing, the CXXC motif is highly conserved across a broad range of retroviral envelope proteins. It is thought to participate in the formation of a labile disulfide bond possibly with the CX6CC motif present in the transmembrane protein. Isomerization of the intersubunit disulfide bond to an SU intrachain disulfide bond is thought to occur upon receptor recognition in order to allow membrane fusion. Expressed at higher level in placental syncytiotrophoblast. Expressed at intermediate level in testis. Seems also to be found at low level in adrenal tissue, bone marrow, breast, colon, kidney, ovary, prostate, skin, spleen, thymus, thyroid, brain and trachea. Both mRNA and protein levels are significantly increased in the brain of individuals with multiple sclerosis, particularly in astrocytes and microglia.

It is found in the cell membrane. It localises to the virion. This endogenous retroviral envelope protein has retained its original fusogenic properties and participates in trophoblast fusion and the formation of a syncytium during placenta morphogenesis. May induce fusion through binding of SLC1A4 and SLC1A5. Its function is as follows. Endogenous envelope proteins may have kept, lost or modified their original function during evolution. Retroviral envelope proteins mediate receptor recognition and membrane fusion during early infection. The surface protein (SU) mediates receptor recognition, while the transmembrane protein (TM) acts as a class I viral fusion protein. The protein may have at least 3 conformational states: pre-fusion native state, pre-hairpin intermediate state, and post-fusion hairpin state. During viral and target cell membrane fusion, the coiled coil regions (heptad repeats) assume a trimer-of-hairpins structure, positioning the fusion peptide in close proximity to the C-terminal region of the ectodomain. The formation of this structure appears to drive apposition and subsequent fusion of membranes. In Homo sapiens (Human), this protein is Syncytin-1 (ERVW-1).